Reading from the N-terminus, the 237-residue chain is Uridylate kinase (237 aa).

10-13 (KLSG) is an ATP binding site. Gly-51 provides a ligand contact to UMP. The ATP site is built by Gly-52 and Arg-56. Residues Asp-71 and 132-139 (MGMPFFST) contribute to the UMP site. 3 residues coordinate ATP: Asn-160, Tyr-166, and Asp-169.

Belongs to the UMP kinase family. In terms of assembly, homohexamer.

The protein resides in the cytoplasm. The enzyme catalyses UMP + ATP = UDP + ADP. It participates in pyrimidine metabolism; CTP biosynthesis via de novo pathway; UDP from UMP (UMPK route): step 1/1. Its activity is regulated as follows. Inhibited by UTP. In terms of biological role, catalyzes the reversible phosphorylation of UMP to UDP. This chain is Uridylate kinase, found in Nocardioides sp. (strain ATCC BAA-499 / JS614).